The primary structure comprises 556 residues: Tripartite motif-containing protein 16 (556 aa).

Residues 1-60 form a disordered region; the sequence is MAELDLIAPGPLTGVTAHPLAPLGPDPVSAIPVEKEDADPLSKSGEETQEQGHDPAELGA. Positions 33–56 are enriched in basic and acidic residues; sequence VEKEDADPLSKSGEETQEQGHDPA. 2 B box-type zinc fingers span residues 64 to 113 and 117 to 156; these read EDQI…LTEP and QDLR…STVS. Position 107 is a phosphoserine (Ser107). Coiled-coil stretches lie at residues 163 to 266 and 312 to 332; these read NKEV…RLAA and NLIQ…REEE. At Ser195 the chain carries Phosphoserine. The B30.2/SPRY domain maps to 347–545; that stretch reads YRTSKPEPRT…RIVDLGEEPE (199 aa).

It belongs to the TRIM/RBCC family. Homodimerizes via its coiled-coil domain. Heterodimerizes with MID1, TRIM24 and PML. Interacts with Galectin-3/LGALS3 in a ULK1-dependent manner; this interaction mediates autophagy of damage endomembranes. Interacts with BECN1. Interacts with ATG16L1. Interacts with p62/SQSTM and LC3B/MAP1LC3B. Post-translationally, phosphorylated by ULK1. In terms of processing, auto-ubiquitinates via its B-Boxes. As to expression, widely expressed. Expressed in basal keratinocytes.

The protein localises to the cytoplasm. The catalysed reaction is S-ubiquitinyl-[E2 ubiquitin-conjugating enzyme]-L-cysteine + [acceptor protein]-L-lysine = [E2 ubiquitin-conjugating enzyme]-L-cysteine + N(6)-ubiquitinyl-[acceptor protein]-L-lysine.. In terms of biological role, E3 ubiquitin ligase that plays an essential role in the organization of autophagic response and ubiquitination upon lysosomal and phagosomal damages. Plays a role in the stress-induced biogenesis and degradation of protein aggresomes by regulating the p62-KEAP1-NRF2 signaling and particularly by modulating the ubiquitination levels and thus stability of NRF2. Acts as a scaffold protein and facilitates autophagic degradation of protein aggregates by interacting with p62/SQSTM, ATG16L1 and LC3B/MAP1LC3B. In turn, protects the cell against oxidative stress-induced cell death as a consequence of endomembrane damage. In Mus musculus (Mouse), this protein is Tripartite motif-containing protein 16 (Trim16).